Consider the following 499-residue polypeptide: Potassium channel subfamily K member 5 (499 aa).

Topologically, residues 1 to 7 are cytoplasmic; it reads MVDRGPL. The helical transmembrane segment at 8-26 threads the bilayer; sequence LTSAIIFYLAIGAAIFEVL. Asparagine 77 carries N-linked (GlcNAc...) asparagine glycosylation. An intramembrane region (pore-forming) is located at residues 85 to 112; that stretch reads WPNAMIFAATVITTIGYGNVAPKTPAGR. The K(+) site is built by threonine 98, isoleucine 99, glycine 100, and tyrosine 101. The selectivity filter 1 stretch occupies residues 98-103; the sequence is TIGYGN. Residues 113-133 form a helical membrane-spanning segment; sequence LFCVFYGLFGVPLCLTWISAL. The Cytoplasmic segment spans residues 134-157; it reads GKFFGGRAKRLGQFLTKRGVSLRK. Residues 158–180 traverse the membrane as a helical segment; sequence AQITCTVIFIVWGVLVHLVIPPF. Positions 190 to 215 form an intramembrane region, pore-forming; it reads YIEGLYYSFITISTIGFGDFVAGVNP. Residues threonine 203, isoleucine 204, glycine 205, and phenylalanine 206 each contribute to the K(+) site. Residues 203-208 form a selectivity filter 2 region; that stretch reads TIGFGD. The helical transmembrane segment at 230-250 threads the bilayer; the sequence is WIYLGLAWLSLFVNWKVSMFV. Residues 251–325 are Cytoplasmic-facing; the sequence is EVHKAIKKRR…SGGGETGPGP (75 aa). Disordered regions lie at residues 312–335, 360–388, and 428–499; these read AMKT…GGLP, QTLR…SPAP, and GLSD…PKGT. A compositionally biased stretch (gly residues) spans 316 to 334; the sequence is SGGGETGPGPGLGPQGGGL. The segment covering 370 to 382 has biased composition (basic and acidic residues); that stretch reads RSPDEEAVARAPE. Phosphoserine is present on serine 371. Residues 466 to 480 show a composition bias toward low complexity; the sequence is SSSESTFTSTESELS.

This sequence belongs to the two pore domain potassium channel (TC 1.A.1.8) family. Homodimer; disulfide-linked. Heterodimer with KCNK16 and KCNK17. As to expression, abundant expression in kidney, also detected in liver, placenta and small intestine. In the kidney, expression is restricted to the distal tubules and collecting ducts. Not expressed in proximal tubules or glomeruli. Expressed in pancreas, in both endocrine (alpha, beta, gamma, delta, and epsilon) and exocrine (acinar and ductal) cells.

The protein localises to the membrane. The catalysed reaction is K(+)(in) = K(+)(out). Its activity is regulated as follows. The channel conductance is stimulated by extracellular alkaline pH. Inhibited by quinine, quinidine and external acidification. K(+) channel that conducts voltage-dependent outward rectifying currents upon membrane depolarization. Voltage sensing is coupled to K(+) electrochemical gradient in an 'ion flux gating' mode where outward but not inward ion flow opens the gate. Homo- and heterodimerizes to form functional channels with distinct regulatory and gating properties. The polypeptide is Potassium channel subfamily K member 5 (Homo sapiens (Human)).